Here is a 380-residue protein sequence, read N- to C-terminus: Cytochrome b (380 aa).

A run of 4 helical transmembrane segments spans residues 33–53 (FGSL…FLAM), 77–98 (WLIR…YLHI), 113–133 (WNVG…GYVL), and 178–198 (FFAF…LHFL). Residues H83 and H97 each coordinate heme b. The heme b site is built by H182 and H196. A ubiquinone is bound at residue H201. The next 4 helical transmembrane spans lie at 226–246 (YKDL…SLFS), 288–308 (LGGV…PILH), 320–340 (LTQI…WIGG), and 347–367 (FIIV…VIMP).

Belongs to the cytochrome b family. The cytochrome bc1 complex contains 3 respiratory subunits (MT-CYB, CYC1 and UQCRFS1), 2 core proteins (UQCRC1 and UQCRC2) and probably 6 low-molecular weight proteins. Requires heme b as cofactor.

It localises to the mitochondrion inner membrane. Functionally, component of the ubiquinol-cytochrome c reductase complex (complex III or cytochrome b-c1 complex) that is part of the mitochondrial respiratory chain. The b-c1 complex mediates electron transfer from ubiquinol to cytochrome c. Contributes to the generation of a proton gradient across the mitochondrial membrane that is then used for ATP synthesis. The protein is Cytochrome b (mt-cyb) of Zeus faber (John Dory).